A 489-amino-acid polypeptide reads, in one-letter code: MLSFWDVAIDFSPEERECLEPDQWDLYRDVMLENYSHLDFLGLALSKPFLVTFLEQRQGPWDVKRQAAAAVHPGKTVNKCKDFSKAFFCKSLLTQHQRIRTGEKAFKCEECGKAFNNRSNLSEHKRIHTGEKPYKCEECGKAFRIRSKLSTHQRVHTGEKPYKCEECGKAFNSHSNLSEHKRIHTGEKPYKCEECGKAFSTRSTYYRHQKNHTGKKPYKCEECAKEFSYPSLLKVHQRIHSAEKSYKCEECGKPFYCPLLLKKHQIIHSAEKPYKCAECGKAFHYPSLLKRHQRIHAGKKPCKCKDCDRAFYSSAFLKRHQRIHSEENSYKCGECGKRFCSFPHLQYHQRFHSGEKPYKCEQCGKTFSTLSYLPWHKLRHSGEKSYKCEKCGKMFYSTLDLKKHQKIHEYKCGECHYGFPNYAALTAHQRVHTGEKPHVCEQCGKDFSRIDSLNQHQLVHTGEKPYKCEKCGKCFYRSSSLKRHQGIHS.

Residues 2–73 (LSFWDVAIDF…KRQAAAAVHP (72 aa)) enclose the KRAB domain. The C2H2-type 1; degenerate zinc-finger motif lies at 78 to 100 (NKCKDFSKAFFCKSLLTQHQRIR). 14 C2H2-type zinc fingers span residues 106–128 (FKCE…KRIH), 134–156 (YKCE…QRVH), 162–184 (YKCE…KRIH), 190–212 (YKCE…QKNH), 218–240 (YKCE…QRIH), 246–268 (YKCE…QIIH), 274–296 (YKCA…QRIH), 302–324 (CKCK…QRIH), 330–352 (YKCG…QRFH), 358–380 (YKCE…KLRH), 386–408 (YKCE…QKIH), 410–432 (YKCG…QRVH), 438–460 (HVCE…QLVH), and 466–488 (YKCE…QGIH).

This sequence belongs to the krueppel C2H2-type zinc-finger protein family. In terms of tissue distribution, expressed in liver, testis and, at considerably lower levels, in brain, spleen and heart.

It is found in the nucleus. Functionally, may have a role during differentiation processes. The chain is Zinc finger protein 58 (Zfp58) from Mus musculus (Mouse).